The chain runs to 582 residues: SUMO-activating enzyme subunit uba-2 (582 aa).

ATP contacts are provided by residues 20-25 (GAGGIG), Asp44, 52-55 (NLNR), Lys68, 91-92 (SI), and 113-118 (DNRAAR). Residues Cys154 and Cys157 each coordinate Zn(2+). The active-site Glycyl thioester intermediate is the Cys170. Residues 204–214 (SPDMDAVDPDN) show a composition bias toward acidic residues. The segment at 204-235 (SPDMDAVDPDNTEAVTTEKEKEAMKEEPAPVG) is disordered. Residues 219–231 (TTEKEKEAMKEEP) show a composition bias toward basic and acidic residues. Zn(2+) contacts are provided by Cys431 and Cys434. Basic and acidic residues predominate over residues 531–570 (FEVARSEKEPEPDDRKRKADGSEEPEAKRQKVEEKDDKNG). Residues 531–582 (FEVARSEKEPEPDDRKRKADGSEEPEAKRQKVEEKDDKNGNEAVAEITETMA) are disordered.

It belongs to the ubiquitin-activating E1 family. Heterodimer with aos-1.

It functions in the pathway protein modification; protein sumoylation. Functionally, the dimeric enzyme acts as an E1 ligase for smo-1. It mediates ATP-dependent activation of smo-1 and formation of a thioester with a conserved cysteine residue on uba-2. The chain is SUMO-activating enzyme subunit uba-2 (uba-2) from Caenorhabditis elegans.